A 111-amino-acid chain; its full sequence is Ciprofloxacin tolerance protein (111 aa).

The Periplasmic segment spans residues 1-5 (MVTAN). The helical transmembrane segment at 6 to 26 (FAAIAGLSLIAVALVAVFFSP) threads the bilayer. Over 27-30 (YRRW) the chain is Cytoplasmic. The chain crosses the membrane as a helical span at residues 31–51 (LGFMLAGMFFWGLLEVVRFGV). The Periplasmic portion of the chain corresponds to 52–58 (QVTFEMP). The chain crosses the membrane as a helical span at residues 59–79 (VTYSYLTALSLAMVMVTFVLL). Residues 80–111 (REDKQAQKALANRQYIEHTPVYEDDQQQCSSR) lie on the Cytoplasmic side of the membrane.

Its subcellular location is the cell inner membrane. Its function is as follows. May play a role in cellular filamentation, especially in response to ciprofloxacin. Increased expression confers tolerance to the antibiotic ciprofloxacin. This Acinetobacter baumannii protein is Ciprofloxacin tolerance protein.